The sequence spans 276 residues: MTSRWTTAVLDTDQPGGWAVARSPEGFLFDDNGVLFPREWLKRQDLSILAEHGIGHLDGEPVYLLELHSTSEVPGCNWKGLRAFMLDGDHTIYKVLGYAAQIGTWAREHRFCGNCGQAMTQVPRERAMYCQPCDLRSYPRISPSMIVLVTRGDEVLLARSPRFVTGVYSTLAGFAEPGESAEDCLIREVREEVQIEVKNIQYMGSQCWPFPHSMMLGFHAEYAGGEIVCQEDEIEDAQWFNVHDLPPLPASKSIARYLIDVYVARRLGHAEPVLPG.

Arg82 contributes to the substrate binding site. Zn(2+)-binding residues include Cys112 and Cys115. Residue Glu125 coordinates substrate. Residues Cys130 and Cys133 each contribute to the Zn(2+) site. Tyr138 contributes to the substrate binding site. One can recognise a Nudix hydrolase domain in the interval 139–262 (PRISPSMIVL…SIARYLIDVY (124 aa)). A divalent metal cation is bound by residues Ala172, Glu188, and Glu192. The short motif at 173–194 (GFAEPGESAEDCLIREVREEVQ) is the Nudix box element. Residue 206 to 213 (QCWPFPHS) coordinates substrate. A divalent metal cation is bound at residue Glu233. A substrate-binding site is contributed by Ala255.

The protein belongs to the Nudix hydrolase family. NudC subfamily. In terms of assembly, homodimer. It depends on Mg(2+) as a cofactor. Mn(2+) is required as a cofactor. Requires Zn(2+) as cofactor.

The enzyme catalyses a 5'-end NAD(+)-phospho-ribonucleoside in mRNA + H2O = a 5'-end phospho-adenosine-phospho-ribonucleoside in mRNA + beta-nicotinamide D-ribonucleotide + 2 H(+). It carries out the reaction NAD(+) + H2O = beta-nicotinamide D-ribonucleotide + AMP + 2 H(+). The catalysed reaction is NADH + H2O = reduced beta-nicotinamide D-ribonucleotide + AMP + 2 H(+). MRNA decapping enzyme that specifically removes the nicotinamide adenine dinucleotide (NAD) cap from a subset of mRNAs by hydrolyzing the diphosphate linkage to produce nicotinamide mononucleotide (NMN) and 5' monophosphate mRNA. The NAD-cap is present at the 5'-end of some mRNAs and stabilizes RNA against 5'-processing. Has preference for mRNAs with a 5'-end purine. Catalyzes the hydrolysis of a broad range of dinucleotide pyrophosphates. The protein is NAD-capped RNA hydrolase NudC of Pseudomonas fluorescens (strain Pf0-1).